The chain runs to 455 residues: Zinc finger protein ZPR1 homolog (455 aa).

C4-type zinc fingers lie at residues 28-60 and 247-279; these read CPVCEEDGETRIMCTSIPYYRAVILMSFECPHC and CPNCHGPTEVKMKPTDIPFFQTVIIMSLACDRC.

Belongs to the ZPR1 family.

It is found in the nucleus. The sequence is that of Zinc finger protein ZPR1 homolog from Caenorhabditis elegans.